A 558-amino-acid chain; its full sequence is MLLDKLSVLSFLGLAPIFAAAQLSGSVGPLTSASTKAATKTCNVLDYGAKADKSTDLGAPLASAFADCKSGGLVYVPSGDYALSTWARLSGGEAWALQIDGIIYRTGTDGGNMIYIEHSSDFELFSSTSEGAMQGLGYEFHADDNWSGPRLLRLYEVTDFSVHDFILVDSPSFHFSLDTCTNGEIYNMAIRGGNHGGLDGIDVWSNNIWVHDVEVTNKDECVTVKGPSKNILIESIYCNWSGGCGMGSFGSDTNVSDITYRNIYTWSSNNMMLIKSNGGSGFVENVLLENFIGHGNAYSLDIDSYWASMSAVDGDGVQLSNITVKNWKGTEAYGAERGPVKVVCADGAPCYDITIEDFAMWTEEGDSQWYSCESAYGSGYCLQDSDDHVSYSVTTSTVSSAPSGYSATSMAADLTTDFGSTVSIPIPTIPTSFYPGATPYSALMANSASTAAASSIASHATVHSSSASVAASVPSAVAPSESIPAATSAVVSSAAAIAPSPAVGAQEGSTTSAPSFAAPSGAGNSPQGPTGASGFGEKGQQGEQGEQGEQGEQGVCYV.

An N-terminal signal peptide occupies residues 1-21 (MLLDKLSVLSFLGLAPIFAAA). Residues Cys42 and Cys68 are joined by a disulfide bond. Asn145 carries an N-linked (GlcNAc...) asparagine glycan. The active-site Proton donor is the Asp219. A disulfide bridge connects residues Cys221 and Cys238. Asn239 and Asn254 each carry an N-linked (GlcNAc...) asparagine glycan. His294 is a catalytic residue. Residue Asn321 is glycosylated (N-linked (GlcNAc...) asparagine). 2 disulfides stabilise this stretch: Cys344–Cys350 and Cys372–Cys381. Residues 503–526 (VGAQEGSTTSAPSFAAPSGAGNSP) are compositionally biased toward low complexity. The interval 503 to 558 (VGAQEGSTTSAPSFAAPSGAGNSPQGPTGASGFGEKGQQGEQGEQGEQGEQGVCYV) is disordered.

This sequence belongs to the glycosyl hydrolase 28 family.

The protein localises to the secreted. The catalysed reaction is Endohydrolysis of alpha-D-GalA-(1-&gt;2)-alpha-L-Rha glycosidic bond in the rhamnogalacturonan I backbone with initial inversion of anomeric configuration releasing oligosaccharides with beta-D-GalA at the reducing end.. Functionally, pectinolytic enzymes consist of four classes of enzymes: pectine lyase, polygalacturonase, pectin methylesterase and rhamnogalacturonase. Hydrolyzes alpha-D-galacturonopyranosyl-(1,2)-alpha-L-rhamnopyranosyl linkages in the backbone of the hairy regions of pectins. The sequence is that of Rhamnogalacturonase B (rhgB) from Aspergillus niger.